A 251-amino-acid polypeptide reads, in one-letter code: Exotoxin type A (251 aa).

A signal peptide spans 1-30 (MENNKKVLKKMVFFVLVTFLGLTISQEVFA). The cysteines at positions 117 and 128 are disulfide-linked.

Belongs to the staphylococcal/streptococcal toxin family.

In terms of biological role, causative agent of the symptoms associated with scarlet fever, have been associated with streptococcal toxic shock-like disease and may play a role in the early events of rheumatic fever. The protein is Exotoxin type A (speA) of Streptococcus pyogenes serotype M18 (strain MGAS8232).